A 1262-amino-acid chain; its full sequence is Zinc finger protein 592 (1262 aa).

A disordered region spans residues 23 to 45 (SLDAKEAIQAPSEENESPLKSSG). A phosphoserine mark is found at S78, S142, S145, and S146. 3 disordered regions span residues 122 to 174 (SFTS…PPPG), 200 to 278 (KKEP…AHSK), and 294 to 494 (VANV…ASTP). Glycyl lysine isopeptide (Lys-Gly) (interchain with G-Cter in SUMO2) cross-links involve residues K200 and K204. Basic and acidic residues-rich tracts occupy residues 213-232 (QQEHEQGGQKVVEPHKDLDS) and 298-308 (TKEDQPGHTKD). Residues 343–367 (PSDSPRSICSDSSSKGSPSVAASSP) show a composition bias toward low complexity. The segment covering 454 to 463 (IKTSDSSSPC) has biased composition (polar residues). Over residues 484–494 (QQSTAPQASTP) the composition is skewed to low complexity. S529 bears the Phosphoserine mark. K546 is covalently cross-linked (Glycyl lysine isopeptide (Lys-Gly) (interchain with G-Cter in SUMO2)). S573 carries the phosphoserine modification. The C2H2-type 1; atypical zinc-finger motif lies at 587–612 (YCCLECGDAFALEKSLSQHYSRRSVH). A C2H2-type 2; atypical zinc finger spans residues 615 to 639 (VLCTLCSKTLLFFNKCSLLRHARDH). A Phosphoserine modification is found at S691. A C2H2-type 3; degenerate zinc finger spans residues 711–731 (TKCPECHKQMRDYMVLATHFQ). The C2H2-type 4 zinc-finger motif lies at 740–764 (LTCQVCQMLLPNQCSFCAHQRIHAH). The C2H2-type 5; atypical zinc finger occupies 768-790 (YCCPECGVLCRSAYFQTHVKENC). 3 C2H2-type zinc fingers span residues 799-822 (YRCIHCGVIHLTLALLKSHIQERH), 827-850 (HKCAFCPMAFKTASSTMDHSTTQH), and 892-915 (FKCPECPLLFLQKPELMQHVKNTH). The segment covering 924–935 (LSSLQSSTDTSS) has biased composition (low complexity). Residues 924–979 (LSSLQSSTDTSSNRPGSRAPAEPPATNVAARGSSLTAGRWGRPEAHRRAEARPRMR) are disordered. The span at 964–976 (GRPEAHRRAEARP) shows a compositional bias: basic and acidic residues. 2 consecutive C2H2-type zinc fingers follow at residues 983–1006 (WTCQECQEWVPDRESYVSHMKKSH) and 1013–1036 (YPCRQCEQSFHNPSSLRKHIRNNH). A C2H2-type 11; atypical zinc finger spans residues 1043-1069 (YTCGYCTEDSPSFPRPSLLESHISLMH). S1089 carries the phosphoserine modification. The C2H2-type 12; atypical zinc-finger motif lies at 1124-1146 (FQCAKCTFATDSELEFQSHIPQH). The C2H2-type 13 zinc-finger motif lies at 1153 to 1176 (AQCLLCGLCYTSTSSLNRHLFIVH). S1198 and S1202 each carry phosphoserine. Residues 1222-1262 (PLVTDLGGQQGLALDEDSAQDPQNQPQASQDQNSHALSPQV) are disordered. Over residues 1241–1262 (QDPQNQPQASQDQNSHALSPQV) the composition is skewed to polar residues.

It belongs to the krueppel C2H2-type zinc-finger protein family. In terms of assembly, interacts with ZMYND8. In terms of tissue distribution, expressed in the brain.

It is found in the nucleus. Its function is as follows. May be involved in transcriptional regulation. The polypeptide is Zinc finger protein 592 (Znf592) (Mus musculus (Mouse)).